Reading from the N-terminus, the 984-residue chain is uncharacterized protein (984 aa).

A disordered region spans residues 941-984 (FGPSGPGPNQGPGDDYNNFKSTKYPRNGYNKYQPNNRIHSRNRY).

The protein localises to the virion. This is an uncharacterized protein from Acanthamoeba polyphaga (Amoeba).